An 879-amino-acid polypeptide reads, in one-letter code: Alanine--tRNA ligase (879 aa).

The Zn(2+) site is built by H566, H570, C668, and H672.

This sequence belongs to the class-II aminoacyl-tRNA synthetase family. Zn(2+) is required as a cofactor.

It is found in the cytoplasm. The catalysed reaction is tRNA(Ala) + L-alanine + ATP = L-alanyl-tRNA(Ala) + AMP + diphosphate. Catalyzes the attachment of alanine to tRNA(Ala) in a two-step reaction: alanine is first activated by ATP to form Ala-AMP and then transferred to the acceptor end of tRNA(Ala). Also edits incorrectly charged Ser-tRNA(Ala) and Gly-tRNA(Ala) via its editing domain. In Listeria welshimeri serovar 6b (strain ATCC 35897 / DSM 20650 / CCUG 15529 / CIP 8149 / NCTC 11857 / SLCC 5334 / V8), this protein is Alanine--tRNA ligase.